Here is a 194-residue protein sequence, read N- to C-terminus: MGLTPSATKPEIAQAPQGIVDPSTGRPVGADDPFFKEINSELADKGFILTTADDLITWARTGSLMWMTFGLACCAVEMMQVSMPRYDVERFGFAPRASPRQSDVMIVAGTLTNKMAPALRKVYDQMPEPRYVISMGSCANGGGYYHFSYAVVRGCDRIVPVDIYVPGCPPTAEALLYGVLLLQKKIRRIGTIER.

The interval 1–26 (MGLTPSATKPEIAQAPQGIVDPSTGR) is disordered. [4Fe-4S] cluster contacts are provided by C73, C74, C138, and C168.

This sequence belongs to the complex I 20 kDa subunit family. As to quaternary structure, NDH-1 is composed of 14 different subunits. Subunits NuoB, C, D, E, F, and G constitute the peripheral sector of the complex. The cofactor is [4Fe-4S] cluster.

Its subcellular location is the cell inner membrane. The catalysed reaction is a quinone + NADH + 5 H(+)(in) = a quinol + NAD(+) + 4 H(+)(out). Functionally, NDH-1 shuttles electrons from NADH, via FMN and iron-sulfur (Fe-S) centers, to quinones in the respiratory chain. The immediate electron acceptor for the enzyme in this species is believed to be ubiquinone. Couples the redox reaction to proton translocation (for every two electrons transferred, four hydrogen ions are translocated across the cytoplasmic membrane), and thus conserves the redox energy in a proton gradient. The sequence is that of NADH-quinone oxidoreductase subunit B from Xanthobacter autotrophicus (strain ATCC BAA-1158 / Py2).